The chain runs to 452 residues: tRNA modification GTPase MnmE (452 aa).

Arginine 25, glutamate 81, and lysine 120 together coordinate (6S)-5-formyl-5,6,7,8-tetrahydrofolate. The 160-residue stretch at 216 to 375 (GITVVIAGEP…LKNHLKNTAG (160 aa)) folds into the TrmE-type G domain. Asparagine 226 lines the K(+) pocket. GTP contacts are provided by residues 226–231 (NVGKSS), 245–251 (TDIAGTT), and 270–273 (DTAG). Serine 230 provides a ligand contact to Mg(2+). The K(+) site is built by threonine 245, isoleucine 247, and threonine 250. Position 251 (threonine 251) interacts with Mg(2+). Lysine 452 contacts (6S)-5-formyl-5,6,7,8-tetrahydrofolate.

Belongs to the TRAFAC class TrmE-Era-EngA-EngB-Septin-like GTPase superfamily. TrmE GTPase family. As to quaternary structure, homodimer. Heterotetramer of two MnmE and two MnmG subunits. Requires K(+) as cofactor.

It is found in the cytoplasm. Exhibits a very high intrinsic GTPase hydrolysis rate. Involved in the addition of a carboxymethylaminomethyl (cmnm) group at the wobble position (U34) of certain tRNAs, forming tRNA-cmnm(5)s(2)U34. The protein is tRNA modification GTPase MnmE of Coxiella burnetii (strain Dugway 5J108-111).